Reading from the N-terminus, the 173-residue chain is Mitochondrial import inner membrane translocase subunit TIM22-1 (173 aa).

The N-terminal 18 residues, 1–18, are a transit peptide targeting the mitochondrion; that stretch reads MADSSAAEPTTGASSPPV. The interval 1-26 is disordered; sequence MADSSAAEPTTGASSPPVASDENSTQ. Transmembrane regions (helical) follow at residues 52-72, 101-119, 128-144, and 151-168; these read VTSG…LGAL, SCKT…ECIV, TVNT…SMSA, and ACIG…IEKF.

The protein belongs to the Tim17/Tim22/Tim23 family. In terms of tissue distribution, expressed in young cotyledons, roots, flowers and leaves.

Its subcellular location is the mitochondrion inner membrane. In terms of biological role, essential core component of the TIM22 complex, a complex that mediates the import and insertion of multi-pass transmembrane proteins into the mitochondrial inner membrane. This chain is Mitochondrial import inner membrane translocase subunit TIM22-1 (TIM22-1), found in Arabidopsis thaliana (Mouse-ear cress).